A 466-amino-acid polypeptide reads, in one-letter code: Glutamate decarboxylase beta (466 aa).

Positions 62 and 83 each coordinate substrate. Pyridoxal 5'-phosphate contacts are provided by residues 126-127, T212, and H275; that span reads SS. The residue at position 276 (K276) is an N6-(pyridoxal phosphate)lysine. An N6-acetyllysine mark is found at K446, K453, and K464.

This sequence belongs to the group II decarboxylase family. Homohexamer composed of three dimers. Requires pyridoxal 5'-phosphate as cofactor.

It carries out the reaction L-glutamate + H(+) = 4-aminobutanoate + CO2. Its function is as follows. Converts glutamate to gamma-aminobutyrate (GABA), consuming one intracellular proton in the reaction. The gad system helps to maintain a near-neutral intracellular pH when cells are exposed to extremely acidic conditions. The ability to survive transit through the acidic conditions of the stomach is essential for successful colonization of the mammalian host by commensal and pathogenic bacteria. This Shigella flexneri protein is Glutamate decarboxylase beta (gadB).